A 273-amino-acid polypeptide reads, in one-letter code: Putative inactive beta-glucuronidase protein GUSBP11 (273 aa).

The segment at 1 to 20 (MTAAETGRGKPRLGGGSGLG) is disordered.

Belongs to the glycosyl hydrolase 2 family.

The protein is Putative inactive beta-glucuronidase protein GUSBP11 (GUSBP11) of Homo sapiens (Human).